Here is a 116-residue protein sequence, read N- to C-terminus: Non-specific lipid-transfer protein D, cotyledon-specific isoform (116 aa).

The signal sequence occupies residues 1–24; that stretch reads MKNIFFSVFFLLSFLLCLANVSEA. 4 disulfides stabilise this stretch: Cys-28–Cys-76, Cys-38–Cys-53, Cys-54–Cys-98, and Cys-74–Cys-112.

The protein belongs to the plant LTP family.

Its function is as follows. Plant non-specific lipid-transfer proteins transfer phospholipids as well as galactolipids across membranes. May play a role in wax or cutin deposition in the cell walls of expanding epidermal cells and certain secretory tissues. This chain is Non-specific lipid-transfer protein D, cotyledon-specific isoform, found in Ricinus communis (Castor bean).